The chain runs to 353 residues: Quinolinate synthase (353 aa).

2 residues coordinate iminosuccinate: His47 and Ser68. Cys113 is a binding site for [4Fe-4S] cluster. Iminosuccinate-binding positions include 139–141 and Ser156; that span reads YAN. Cys200 contributes to the [4Fe-4S] cluster binding site. Iminosuccinate is bound by residues 226-228 and Thr243; that span reads HPE. Cys297 contributes to the [4Fe-4S] cluster binding site.

The protein belongs to the quinolinate synthase family. Type 1 subfamily. It depends on [4Fe-4S] cluster as a cofactor.

The protein localises to the cytoplasm. It catalyses the reaction iminosuccinate + dihydroxyacetone phosphate = quinolinate + phosphate + 2 H2O + H(+). It functions in the pathway cofactor biosynthesis; NAD(+) biosynthesis; quinolinate from iminoaspartate: step 1/1. Functionally, catalyzes the condensation of iminoaspartate with dihydroxyacetone phosphate to form quinolinate. The sequence is that of Quinolinate synthase from Serratia proteamaculans (strain 568).